A 148-amino-acid polypeptide reads, in one-letter code: Transcriptional regulator MraZ (148 aa).

2 consecutive SpoVT-AbrB domains span residues 5–53 (ETAI…VEKE) and 82–125 (SALL…SEQA).

This sequence belongs to the MraZ family. As to quaternary structure, forms oligomers.

It localises to the cytoplasm. It is found in the nucleoid. This chain is Transcriptional regulator MraZ, found in Xylella fastidiosa (strain 9a5c).